Reading from the N-terminus, the 504-residue chain is L-amino-acid oxidase (504 aa).

The N-terminal stretch at Met-1–Cys-18 is a signal peptide. Cys-28 and Cys-191 form a disulfide bridge. FAD contacts are provided by residues Met-61–Ser-62, Glu-81–Ala-82, Arg-89, and Gly-105–Arg-108. Arg-108 contributes to the substrate binding site. A glycan (N-linked (GlcNAc...) asparagine) is linked at Asn-190. His-241 serves as a coordination point for substrate. Val-279 contributes to the FAD binding site. Cys-349 and Cys-430 are oxidised to a cystine. A glycan (N-linked (GlcNAc...) asparagine) is linked at Asn-379. A substrate-binding site is contributed by Tyr-390. Residues Glu-475 and Gly-482–Thr-487 contribute to the FAD site. Residue Gly-482–Trp-483 coordinates substrate.

It belongs to the flavin monoamine oxidase family. FIG1 subfamily. In terms of assembly, homodimer; non-covalently linked. It depends on FAD as a cofactor. Expressed by the venom gland.

It localises to the secreted. The catalysed reaction is an L-alpha-amino acid + O2 + H2O = a 2-oxocarboxylate + H2O2 + NH4(+). The enzyme catalyses L-leucine + O2 + H2O = 4-methyl-2-oxopentanoate + H2O2 + NH4(+). It carries out the reaction L-phenylalanine + O2 + H2O = 3-phenylpyruvate + H2O2 + NH4(+). It catalyses the reaction L-tryptophan + O2 + H2O = indole-3-pyruvate + H2O2 + NH4(+). The catalysed reaction is L-methionine + O2 + H2O = 4-methylsulfanyl-2-oxobutanoate + H2O2 + NH4(+). The enzyme catalyses L-tyrosine + O2 + H2O = 3-(4-hydroxyphenyl)pyruvate + H2O2 + NH4(+). Functionally, catalyzes an oxidative deamination of predominantly hydrophobic and aromatic L-amino acids, thus producing hydrogen peroxide that may contribute to the diverse toxic effects of this enzyme. Is highly active on L-Tyr followed by L-Phe, L-Met, L-Leu, L-Trp, and weakly active on L-Ile, L-Arg, L-Val, L-Lys, and L-Ala. Inhibits ADP- and collagen-induced platelet aggregation. This inhibition is inhibited by catalase, indicating the importance of generated H(2)O(2) for the inhibitory effect. This effect on platelets among snake L-amino-acid oxidases is however controversial, since some of them induce aggregation, whereas the other inhibit agonist-induced aggregation. In vivo, this enzyme induces a rapid, substantial and reversible increase in the paw volume of mice (edema). In addition, myofibrosis, and inflammatory cell infiltration on the paw tissue are also observed. In Daboia russelii (Russel's viper), this protein is L-amino-acid oxidase.